A 434-amino-acid polypeptide reads, in one-letter code: GTPase Obg (434 aa).

One can recognise an Obg domain in the interval 4–162 (ADFIDRIVIY…RKLVLELKLL (159 aa)). Residues 163-333 (ADVGLVGYPN…IVYKLAEIVK (171 aa)) enclose the OBG-type G domain. GTP is bound by residues 169–176 (GYPNVGKS), 194–198 (FTTTI), 215–218 (DIPG), 285–288 (NKID), and 314–316 (SII). Residues serine 176 and threonine 196 each coordinate Mg(2+). Residues 355-434 (LWKELPERFN…VAQRAFEYKE (80 aa)) form the OCT domain.

This sequence belongs to the TRAFAC class OBG-HflX-like GTPase superfamily. OBG GTPase family. As to quaternary structure, monomer. Requires Mg(2+) as cofactor.

It is found in the cytoplasm. In terms of biological role, an essential GTPase which binds GTP, GDP and possibly (p)ppGpp with moderate affinity, with high nucleotide exchange rates and a fairly low GTP hydrolysis rate. Plays a role in control of the cell cycle, stress response, ribosome biogenesis and in those bacteria that undergo differentiation, in morphogenesis control. This Thermosipho africanus (strain TCF52B) protein is GTPase Obg.